The primary structure comprises 447 residues: N-succinylarginine dihydrolase (447 aa).

Residues 19 to 28 (AGLSFGNKAS), asparagine 110, and 137 to 138 (HR) each bind substrate. Glutamate 174 is an active-site residue. Arginine 212 contributes to the substrate binding site. Residue histidine 248 is part of the active site. Substrate-binding residues include aspartate 250 and asparagine 359. Residue cysteine 365 is the Nucleophile of the active site.

This sequence belongs to the succinylarginine dihydrolase family. Homodimer.

The enzyme catalyses N(2)-succinyl-L-arginine + 2 H2O + 2 H(+) = N(2)-succinyl-L-ornithine + 2 NH4(+) + CO2. It functions in the pathway amino-acid degradation; L-arginine degradation via AST pathway; L-glutamate and succinate from L-arginine: step 2/5. In terms of biological role, catalyzes the hydrolysis of N(2)-succinylarginine into N(2)-succinylornithine, ammonia and CO(2). The protein is N-succinylarginine dihydrolase of Escherichia coli O157:H7.